The primary structure comprises 747 residues: Protein O-mannosyl-transferase 1 (747 aa).

The next 9 membrane-spanning stretches (helical) occupy residues 8-28, 40-60, 68-88, 99-119, 122-142, 154-174, 183-203, 206-226, and 269-289; these read PVVVTADINLSLVALTGMGLL, VVFDEVYYGQYISFYMKQIFF, FGHMVLALGGYLGGFDGNFLW, VPVWSLRLLPALAGALSVPMA, IVLELHFSHCAAMGAALLMLI, LLESVLIFFNLLAVLSYLKFF, SLSWWFWLTLTGVACSCAVGI, MGVFTYVLVLGVAAVHAWHLL, and LLVIPVVLYLLFFYVHLILVF. MIR domains lie at 318-381, 392-449, and 453-513; these read PLEV…VKDP, PRPV…LEIV, and SDTD…VEEH. 3 N-linked (GlcNAc...) asparagine glycosylation sites follow: asparagine 435, asparagine 471, and asparagine 539. A run of 3 helical transmembrane segments spans residues 597-617, 636-656, and 661-681; these read IVIWVSGSLALAIYALLSLWY, WVLAGALCAGGWAVNYLPFFL, and LFLYHYLPALTFQILLLPVVL.

It belongs to the glycosyltransferase 39 family. In terms of assembly, interacts with POMT2. Widely expressed. Highly expressed in testis, heart and pancreas. Detected at lower levels in kidney, skeletal muscle, brain, placenta, lung and liver.

Its subcellular location is the endoplasmic reticulum membrane. The catalysed reaction is a di-trans,poly-cis-dolichyl beta-D-mannosyl phosphate + L-seryl-[protein] = 3-O-(alpha-D-mannosyl)-L-seryl-[protein] + a di-trans,poly-cis-dolichyl phosphate + H(+). The enzyme catalyses a di-trans,poly-cis-dolichyl beta-D-mannosyl phosphate + L-threonyl-[protein] = 3-O-(alpha-D-mannosyl)-L-threonyl-[protein] + a di-trans,poly-cis-dolichyl phosphate + H(+). It functions in the pathway protein modification; protein glycosylation. With respect to regulation, slightly activated by Mg(2+) and inhibited by both Ca(+) and Mn(2+). EDTA ha no effect on activity in vitro. Its function is as follows. Transfers mannosyl residues to the hydroxyl group of serine or threonine residues. Coexpression of both POMT1 and POMT2 is necessary for enzyme activity, expression of either POMT1 or POMT2 alone is insufficient. Essentially dedicated to O-mannosylation of alpha-DAG1 and few other proteins but not of cadherins and protocaherins. In Homo sapiens (Human), this protein is Protein O-mannosyl-transferase 1 (POMT1).